Reading from the N-terminus, the 719-residue chain is Protein ENHANCED DISEASE RESISTANCE 2-like (719 aa).

The region spanning 3–110 (KVVYEGWMVR…WKEKIECVID (108 aa)) is the PH domain. Positions 134 to 173 (AGRTASSSDHESPFSALEDENDSQRDLLRRTTIGNGPPES) are disordered. Residues 180–392 (EFDAELSNQS…VSGLREWFSQ (213 aa)) form the START domain. The tract at residues 414–478 (ALGKGGKHHH…ETDAKKTEEP (65 aa)) is disordered. Polar residues predominate over residues 426–439 (SLSIDQTNGASRNS). A compositionally biased stretch (acidic residues) spans 442–461 (MDEDSDDDDEFQIPDSEPEP). Over residues 462-477 (ETSKQDQETDAKKTEE) the composition is skewed to basic and acidic residues. A helical membrane pass occupies residues 665 to 685 (GVLGLVIGVITSLVVEMAFLV).

Its subcellular location is the endoplasmic reticulum membrane. It is found in the cell membrane. The protein resides in the endosome membrane. Binds to phosphatidylinositol-4-phosphate (PtdIns(4)P). May regulate the salicylic acid- (SA-) mediated resistance to pathogens. The protein is Protein ENHANCED DISEASE RESISTANCE 2-like (EDR2L) of Arabidopsis thaliana (Mouse-ear cress).